The primary structure comprises 962 residues: Protease 3 (962 aa).

The N-terminal stretch at Met-1–Ala-23 is a signal peptide. Residue His-88 participates in Zn(2+) binding. Glu-91 functions as the Proton acceptor in the catalytic mechanism. Residues His-92 and Glu-169 each coordinate Zn(2+).

The protein belongs to the peptidase M16 family. As to quaternary structure, monomer. Zn(2+) serves as cofactor.

The protein localises to the periplasm. The catalysed reaction is Preferential cleavage of 16-Tyr-|-Leu-17 and 25-Phe-|-Tyr-26 bonds of oxidized insulin B chain. Also acts on other substrates of Mw less than 7 kDa such as insulin and glucagon.. Endopeptidase that degrades small peptides of less than 7 kDa, such as glucagon and insulin. In Salmonella typhi, this protein is Protease 3 (ptrA).